Reading from the N-terminus, the 189-residue chain is Hypoxanthine/guanine phosphoribosyltransferase (189 aa).

Belongs to the purine/pyrimidine phosphoribosyltransferase family. Archaeal HPRT subfamily. As to quaternary structure, homodimer.

It is found in the cytoplasm. It carries out the reaction IMP + diphosphate = hypoxanthine + 5-phospho-alpha-D-ribose 1-diphosphate. The catalysed reaction is GMP + diphosphate = guanine + 5-phospho-alpha-D-ribose 1-diphosphate. It participates in purine metabolism; IMP biosynthesis via salvage pathway; IMP from hypoxanthine: step 1/1. Functionally, catalyzes a salvage reaction resulting in the formation of IMP that is energically less costly than de novo synthesis. In Methanosarcina mazei (strain ATCC BAA-159 / DSM 3647 / Goe1 / Go1 / JCM 11833 / OCM 88) (Methanosarcina frisia), this protein is Hypoxanthine/guanine phosphoribosyltransferase.